Reading from the N-terminus, the 360-residue chain is Phospho-N-acetylmuramoyl-pentapeptide-transferase (360 aa).

A run of 10 helical transmembrane segments spans residues 25–45, 73–93, 97–117, 132–152, 168–188, 199–219, 236–256, 263–283, 288–308, and 339–359; these read RAIL…PWVI, TMGG…WADL, YVLA…VDDY, WKYF…FVTA, VAWQ…VGFS, GLAI…AYLV, SGEL…FLWF, VFMG…IAVI, IVFF…ILQV, and IVRF…TLKI.

This sequence belongs to the glycosyltransferase 4 family. MraY subfamily. The cofactor is Mg(2+).

The protein resides in the cell inner membrane. The catalysed reaction is UDP-N-acetyl-alpha-D-muramoyl-L-alanyl-gamma-D-glutamyl-meso-2,6-diaminopimeloyl-D-alanyl-D-alanine + di-trans,octa-cis-undecaprenyl phosphate = di-trans,octa-cis-undecaprenyl diphospho-N-acetyl-alpha-D-muramoyl-L-alanyl-D-glutamyl-meso-2,6-diaminopimeloyl-D-alanyl-D-alanine + UMP. It functions in the pathway cell wall biogenesis; peptidoglycan biosynthesis. Its function is as follows. Catalyzes the initial step of the lipid cycle reactions in the biosynthesis of the cell wall peptidoglycan: transfers peptidoglycan precursor phospho-MurNAc-pentapeptide from UDP-MurNAc-pentapeptide onto the lipid carrier undecaprenyl phosphate, yielding undecaprenyl-pyrophosphoryl-MurNAc-pentapeptide, known as lipid I. In Teredinibacter turnerae (strain ATCC 39867 / T7901), this protein is Phospho-N-acetylmuramoyl-pentapeptide-transferase.